Consider the following 369-residue polypeptide: Phosphatidylglycerol--prolipoprotein diacylglyceryl transferase (369 aa).

Helical transmembrane passes span 26–46 (YYGILYATGILVAIIAGILTL), 60–80 (YVFIGIISIIFGARTWSFIIG), and 97–117 (LAIQGGVIFTITTGLIFFFFI). Arginine 167 contacts a 1,2-diacyl-sn-glycero-3-phospho-(1'-sn-glycerol). Helical transmembrane passes span 216 to 236 (VPIFLIESFFNVIAFIIIVFL) and 273 to 293 (FVTSIVTSVLFLLGGSIGFIF).

It belongs to the Lgt family.

The protein localises to the cell membrane. The enzyme catalyses L-cysteinyl-[prolipoprotein] + a 1,2-diacyl-sn-glycero-3-phospho-(1'-sn-glycerol) = an S-1,2-diacyl-sn-glyceryl-L-cysteinyl-[prolipoprotein] + sn-glycerol 1-phosphate + H(+). Its pathway is protein modification; lipoprotein biosynthesis (diacylglyceryl transfer). Functionally, catalyzes the transfer of the diacylglyceryl group from phosphatidylglycerol to the sulfhydryl group of the N-terminal cysteine of a prolipoprotein, the first step in the formation of mature lipoproteins. The polypeptide is Phosphatidylglycerol--prolipoprotein diacylglyceryl transferase (Mycoplasmoides gallisepticum (strain R(low / passage 15 / clone 2)) (Mycoplasma gallisepticum)).